A 324-amino-acid polypeptide reads, in one-letter code: 1-deoxyxylulose-5-phosphate synthase YajO (324 aa).

Y61 (proton donor) is an active-site residue.

The protein belongs to the aldo/keto reductase family. Aldo/keto reductase 2 subfamily.

The enzyme catalyses D-ribulose 5-phosphate + AH2 = 1-deoxy-D-xylulose 5-phosphate + A + H2O. With respect to regulation, NADH, NADPH or ATP do not increase activity. Its function is as follows. Catalyzes the conversion of ribulose 5-phosphate (Ru5P) to 1-deoxy-D-xylulose 5-phosphate (DXP), providing a direct route from pentoses to terpenes. May play a role in biosynthesis of DXP under conditions of thiamine starvation. The protein is 1-deoxyxylulose-5-phosphate synthase YajO (yajO) of Escherichia coli (strain K12).